Here is a 70-residue protein sequence, read N- to C-terminus: Large ribosomal subunit protein bL31 (70 aa).

4 residues coordinate Zn(2+): Cys-16, Cys-18, Cys-37, and Cys-40.

The protein belongs to the bacterial ribosomal protein bL31 family. Type A subfamily. As to quaternary structure, part of the 50S ribosomal subunit. Requires Zn(2+) as cofactor.

Its function is as follows. Binds the 23S rRNA. This is Large ribosomal subunit protein bL31 from Shewanella woodyi (strain ATCC 51908 / MS32).